The chain runs to 763 residues: Amine oxidase [copper-containing] 3 (763 aa).

The Cytoplasmic portion of the chain corresponds to 1-5 (MNQKT). The helical; Signal-anchor for type II membrane protein transmembrane segment at 6 to 26 (ILVLLILAVITIFALVCVLLV) threads the bilayer. Residues 27–763 (GRGGDGGEPS…AFSHGGFSHN (737 aa)) are Extracellular-facing. Ser43 carries O-linked (GalNAc...) serine glycosylation. An N-linked (GlcNAc...) asparagine glycan is attached at Asn137. The cysteines at positions 198 and 199 are disulfide-linked. Residue Thr212 is glycosylated (O-linked (GalNAc...) threonine). Asn232 and Asn294 each carry an N-linked (GlcNAc...) asparagine glycan. The active-site Proton acceptor is the Asp386. A disulfide bridge links Cys404 with Cys430. Catalysis depends on Tyr471, which acts as the Schiff-base intermediate with substrate; via topaquinone. At Tyr471 the chain carries 2',4',5'-topaquinone. His520 and His522 together coordinate Cu(2+). 4 residues coordinate Ca(2+): Asp529, Leu530, Asp531, and Glu572. The N-linked (GlcNAc...) (complex) asparagine glycan is linked to Asn592. A glycan (N-linked (GlcNAc...) asparagine) is linked at Asn618. Ca(2+) contacts are provided by Glu641, Phe663, and Asn665. An N-linked (GlcNAc...) asparagine glycan is attached at Asn666. 3 residues coordinate Ca(2+): Glu667, Asp673, and Leu674. Thr679 is a glycosylation site (O-linked (GlcNAc) threonine). His684 contributes to the Cu(2+) binding site. A disulfide bond links Cys734 and Cys741.

This sequence belongs to the copper/topaquinone oxidase family. Homodimer; disulfide-linked. Can heterodimerize with isoform 2 leading to reduced surface expression. Probably forms heterodimers with AOC2. Cu(2+) serves as cofactor. Ca(2+) is required as a cofactor. It depends on L-topaquinone as a cofactor. Topaquinone (TPQ) is generated by copper-dependent autoxidation of a specific tyrosyl residue. Post-translationally, N- and O-glycosylated. Strongly expressed on the high endothelial venules of peripheral lymph nodes and on hepatic endothelia. Also highly expressed in appendix, lung and small intestine. Expressed also in adipose tissue, in bone marrow, colon, heart, kidney, ovary, pancreas, placenta, prostate, skeletal muscle, spleen and testis. Isoform 2 seems to be the predominant transcript in fetal kidneys, fetal cartilage and fetal tonsils. The highest relative expression of isoform 2 occurs in skeletal muscle, heart, pancreas, kidney, and lung.

It is found in the cell membrane. The catalysed reaction is methylamine + O2 + H2O = formaldehyde + H2O2 + NH4(+). It catalyses the reaction benzylamine + O2 + H2O = benzaldehyde + H2O2 + NH4(+). It carries out the reaction 2-phenylethylamine + O2 + H2O = 2-phenylacetaldehyde + H2O2 + NH4(+). Its function is as follows. Catalyzes the oxidative deamination of primary amines to the corresponding aldehydes with the concomitant production of hydrogen peroxide and ammonia. Has a preference for the primary monoamines methylamine and benzylamine. Could also act on 2-phenylethylamine but much less efficiently. At endothelial cells surface can also function as a cell adhesion protein that participates in lymphocyte extravasation and recirculation by mediating the binding of lymphocytes to peripheral lymph node vascular endothelial cells in an L-selectin-independent fashion. Has no semicarbazide-sensitive amine oxidase (SSAO) activity. The sequence is that of Amine oxidase [copper-containing] 3 from Homo sapiens (Human).